Consider the following 681-residue polypeptide: Sterile alpha motif domain-containing protein 11 (681 aa).

Disordered regions lie at residues 41–77 (RNLK…EDGP), 212–234 (YHLG…HLPS), 251–307 (GPSG…APHV), and 407–498 (LLAL…GAEG). Residue Lys-72 forms a Glycyl lysine isopeptide (Lys-Gly) (interchain with G-Cter in SUMO2) linkage. The span at 219 to 234 (HGEDPPWHDPPHHLPS) shows a compositional bias: basic and acidic residues. A compositionally biased stretch (pro residues) spans 412 to 423 (PQGPPGSGPPTP). At Thr-485 the chain carries Phosphothreonine. An SAM domain is found at 543–608 (WTVDDVCSFV…AQVARRLGRV (66 aa)). The disordered stretch occupies residues 625 to 681 (LRAPERELGTGEQPLSPTTATSPYGGGHALAGQTSPKQENGTLALLPGAPDPSQPLC). Polar residues-rich tracts occupy residues 637-646 (QPLSPTTATS) and 656-665 (GQTSPKQENG). Position 640 is a phosphoserine (Ser-640).

Self-associates. Component of a Polycomb group (PcG) multiprotein PRC1-like complex. Interacts with SAMD7 and PHC2. As to expression, expressed in the outer and inner nuclear layers, ganglion cell layer and rod photoreceptors of the retina (at protein level). Widely expressed, showing the highest expression in kidney, prostate and retina.

The protein resides in the nucleus. Functionally, component of a Polycomb group (PcG) multiprotein PRC1-like complex, essential for establishing rod photoreceptor cell identity and function by silencing nonrod gene expression in developing rod photoreceptor cells. The polypeptide is Sterile alpha motif domain-containing protein 11 (SAMD11) (Homo sapiens (Human)).